We begin with the raw amino-acid sequence, 602 residues long: UvrABC system protein C (602 aa).

One can recognise a GIY-YIG domain in the interval 17-94 (TTSGCYKMYS…IKEHKPDYNI (78 aa)). Residues 199 to 234 (SKLLDEIEIKMKEVIKREDFESAIKLKETKRSLIEI) form the UVR domain.

The protein belongs to the UvrC family. In terms of assembly, interacts with UvrB in an incision complex.

It localises to the cytoplasm. Its function is as follows. The UvrABC repair system catalyzes the recognition and processing of DNA lesions. UvrC both incises the 5' and 3' sides of the lesion. The N-terminal half is responsible for the 3' incision and the C-terminal half is responsible for the 5' incision. This chain is UvrABC system protein C, found in Borrelia turicatae (strain 91E135).